Consider the following 600-residue polypeptide: ATP-dependent zinc metalloprotease FtsH 1 (600 aa).

The Cytoplasmic segment spans residues 1 to 8; it reads MKTHYFKK. The helical transmembrane segment at 9-29 threads the bilayer; the sequence is IFNLKFLVIFFSILFCILLIL. Residues 30–130 are Extracellular-facing; it reads DLTFERRIKG…PKTDFHLSEL (101 aa). The helical transmembrane segment at 131 to 151 threads the bilayer; the sequence is ILSLVPIVSSTIFMFYIISNI. Residues 152–600 are Cytoplasmic-facing; that stretch reads KKSSGKLNSN…IEQLVVNTKK (449 aa). 215 to 222 lines the ATP pocket; that stretch reads GPPGTGKT. Position 437 (His437) interacts with Zn(2+). Residue Glu438 is part of the active site. The Zn(2+) site is built by His441 and Asp513.

It in the central section; belongs to the AAA ATPase family. The protein in the C-terminal section; belongs to the peptidase M41 family. As to quaternary structure, homohexamer. Zn(2+) serves as cofactor.

Its subcellular location is the cell membrane. In terms of biological role, acts as a processive, ATP-dependent zinc metallopeptidase for both cytoplasmic and membrane proteins. Plays a role in the quality control of integral membrane proteins. The protein is ATP-dependent zinc metalloprotease FtsH 1 of Phytoplasma mali (strain AT).